An 865-amino-acid polypeptide reads, in one-letter code: MGSIDTVGMGQRAIDQIISELSLNEKVALLSGVDAWHTFAIPRLGIPSIRTTDGPNGARGTRYFNGVPSACLPCGTALGATFDRDLIFSLGQLLAAECRAKGAHVLLGPTINIQRGPLGGRGFESFSEDPVLSGLAAASYCSGVQDGGVVPTLKHLVCNDQEHERVAVSALVTPRALREIYLLPFQLAIQGARPGAVMTSYNKVNGLHASENPGLIRDILRGEWGYEGAVISDWFGTYSVADAVNAGLDLEMPGPTRFRGPALMHALTSNKVSEKTLNERVRKVLELVQLASRAGVPEYAPERKLNRPEDRALLRRAAGESVVLLKNDKNDSTNSPILPLDREKTTLVIGPNADLAAYCGGGSASLLAYYTVTPRQGIADKCGAEQVVFSQGCYGHKELPLLGEHLRTIETGQPGYTFRVYTEPPPASGSFKGSDSRTPVDELHMTNSSAFLMDYSHPQISGDTYYATLEGTFEPPESGVYEFGLTVAGTGLLYIDGVLVVDNKTVQRAGTSFFGIGTVEERGERYLEAGKKHHVFVEFGTAPTSNLQHHHGVVSFGPGGLRLGGCRKLDTDTAIQQAVQSAAQADQVVVCVGLSGDWESEGFDRPHMDLPPGTEELVNAVLAVQPNAVIVVQSGTPVTMPWADKAKALLQAWYGGNEAGNGIADVLFGDVNPSAKLPLTFPRELSQNPSYLSYRSERGRVLYSEDIYVGYRYYDTTGQPPLFRFGHGLSYSTFHLRDLTVRETAPYAANIKESSLRVSVTVSNTSARPGAEVVLVYVRPPAAACSVGRPVRELKGYEKVMLQPGETREVSITIPLGLATSFWDEGCDAWLSEKGLYFVEAVGTGEGNTLVAPLTVQVSRVWNGL.

Asp233 is a catalytic residue. N-linked (GlcNAc...) asparagine glycans are attached at residues Asn330, Asn447, Asn503, and Asn764. Residues 411-579 enclose the PA14 domain; the sequence is TGQPGYTFRV…DTDTAIQQAV (169 aa).

Belongs to the glycosyl hydrolase 3 family.

It is found in the secreted. The enzyme catalyses Hydrolysis of terminal, non-reducing beta-D-glucosyl residues with release of beta-D-glucose.. It functions in the pathway glycan metabolism; cellulose degradation. Functionally, beta-glucosidases are one of a number of cellulolytic enzymes involved in the degradation of cellulosic biomass. Catalyzes the last step releasing glucose from the inhibitory cellobiose. The chain is Probable beta-glucosidase J (bglJ) from Aspergillus fumigatus (strain CBS 144.89 / FGSC A1163 / CEA10) (Neosartorya fumigata).